We begin with the raw amino-acid sequence, 213 residues long: Cysteine dioxygenase (213 aa).

3 residues coordinate Fe cation: His100, His102, and His160. Positions 107 to 177 form a cross-link, 3'-(S-cysteinyl)-tyrosine (Cys-Tyr); that stretch reads CVMKVLKGSL…TNFAISLHLY (71 aa).

It belongs to the cysteine dioxygenase family. Fe cation is required as a cofactor. The thioether cross-link between Cys-107 and Tyr-177 plays a structural role through stabilizing the Fe(2+) ion, and prevents the production of highly damaging free hydroxyl radicals by holding the oxygen radical via hydroxyl hydrogen.

The catalysed reaction is L-cysteine + O2 = 3-sulfino-L-alanine + H(+). The sequence is that of Cysteine dioxygenase (CDO1) from Ajellomyces capsulatus (strain G186AR / H82 / ATCC MYA-2454 / RMSCC 2432) (Darling's disease fungus).